Here is a 208-residue protein sequence, read N- to C-terminus: ATP phosphoribosyltransferase (208 aa).

It belongs to the ATP phosphoribosyltransferase family. Short subfamily. Heteromultimer composed of HisG and HisZ subunits.

The protein resides in the cytoplasm. It carries out the reaction 1-(5-phospho-beta-D-ribosyl)-ATP + diphosphate = 5-phospho-alpha-D-ribose 1-diphosphate + ATP. Its pathway is amino-acid biosynthesis; L-histidine biosynthesis; L-histidine from 5-phospho-alpha-D-ribose 1-diphosphate: step 1/9. In terms of biological role, catalyzes the condensation of ATP and 5-phosphoribose 1-diphosphate to form N'-(5'-phosphoribosyl)-ATP (PR-ATP). Has a crucial role in the pathway because the rate of histidine biosynthesis seems to be controlled primarily by regulation of HisG enzymatic activity. This chain is ATP phosphoribosyltransferase, found in Hydrogenovibrio crunogenus (strain DSM 25203 / XCL-2) (Thiomicrospira crunogena).